Here is a 185-residue protein sequence, read N- to C-terminus: Threonylcarbamoyl-AMP synthase (185 aa).

Positions 5 to 185 constitute a YrdC-like domain; the sequence is ADRIADAVAA…DLQSGETLRR (181 aa).

This sequence belongs to the SUA5 family. TsaC subfamily.

The protein localises to the cytoplasm. The enzyme catalyses L-threonine + hydrogencarbonate + ATP = L-threonylcarbamoyladenylate + diphosphate + H2O. In terms of biological role, required for the formation of a threonylcarbamoyl group on adenosine at position 37 (t(6)A37) in tRNAs that read codons beginning with adenine. Catalyzes the conversion of L-threonine, HCO(3)(-)/CO(2) and ATP to give threonylcarbamoyl-AMP (TC-AMP) as the acyladenylate intermediate, with the release of diphosphate. The protein is Threonylcarbamoyl-AMP synthase of Chromohalobacter salexigens (strain ATCC BAA-138 / DSM 3043 / CIP 106854 / NCIMB 13768 / 1H11).